The sequence spans 236 residues: Potassium/proton antiporter CemA (236 aa).

The next 4 helical transmembrane spans lie at 12–32, 114–134, 161–181, and 196–216; these read TVTSIKYFISFILFVLITNHV, IANVFADLLSLCIFVLALLLG, IILFTDIFVGFHSSHGWEILI, and FIFLFVATFPVVLDTVFKYWI.

It belongs to the CemA family.

It is found in the plastid. It localises to the chloroplast inner membrane. It catalyses the reaction K(+)(in) + H(+)(out) = K(+)(out) + H(+)(in). Contributes to K(+)/H(+) antiport activity by supporting proton efflux to control proton extrusion and homeostasis in chloroplasts in a light-dependent manner to modulate photosynthesis. Prevents excessive induction of non-photochemical quenching (NPQ) under continuous-light conditions. Indirectly promotes efficient inorganic carbon uptake into chloroplasts. The protein is Potassium/proton antiporter CemA of Chlorokybus atmophyticus (Soil alga).